A 318-amino-acid chain; its full sequence is Methionyl-tRNA formyltransferase (318 aa).

110-113 (SLLP) serves as a coordination point for (6S)-5,6,7,8-tetrahydrofolate.

It belongs to the Fmt family.

The enzyme catalyses L-methionyl-tRNA(fMet) + (6R)-10-formyltetrahydrofolate = N-formyl-L-methionyl-tRNA(fMet) + (6S)-5,6,7,8-tetrahydrofolate + H(+). Functionally, attaches a formyl group to the free amino group of methionyl-tRNA(fMet). The formyl group appears to play a dual role in the initiator identity of N-formylmethionyl-tRNA by promoting its recognition by IF2 and preventing the misappropriation of this tRNA by the elongation apparatus. In Ligilactobacillus salivarius (strain UCC118) (Lactobacillus salivarius), this protein is Methionyl-tRNA formyltransferase.